The primary structure comprises 762 residues: Polyribonucleotide nucleotidyltransferase (762 aa).

Residues Asp531 and Asp537 each coordinate Mg(2+). Positions 597–656 constitute a KH domain; sequence PRVTTIKVPVDKIGEVIGPKGKVINSITEETGAQISIEDDGTVFVGATDGPSAQAAIDKI. The region spanning 668–737 is the S1 motif domain; sequence GERFLGTVVK…KRGKISLVLV (70 aa).

The protein belongs to the polyribonucleotide nucleotidyltransferase family. It depends on Mg(2+) as a cofactor.

Its subcellular location is the cytoplasm. The catalysed reaction is RNA(n+1) + phosphate = RNA(n) + a ribonucleoside 5'-diphosphate. Its function is as follows. Involved in mRNA degradation. Catalyzes the phosphorolysis of single-stranded polyribonucleotides processively in the 3'- to 5'-direction. In Mycobacterium marinum (strain ATCC BAA-535 / M), this protein is Polyribonucleotide nucleotidyltransferase.